A 516-amino-acid polypeptide reads, in one-letter code: Sodium channel protein Nach (516 aa).

The Cytoplasmic portion of the chain corresponds to 1-49 (MGHEEELSPEQVDLKVSPLMGSLKRTWNDFCATSSIHGLRYTRDEDTNR). Residues 50–70 (IVHFVWLLISLVMFICAVVMA) form a helical membrane-spanning segment. Over 71–452 (RTFYIDFRSN…LVSNLGSAFS (382 aa)) the chain is Extracellular. N-linked (GlcNAc...) asparagine glycans are attached at residues Asn128, Asn165, Asn220, and Asn348. Residues 453 to 473 (LFVGMSMLSVVEIMYYFSVIL) form a helical membrane-spanning segment. Residues 474-516 (RKNYVLECEARKKMLHKGPKFAWPKANDSHSKHQKSVFIIHKM) lie on the Cytoplasmic side of the membrane.

It belongs to the amiloride-sensitive sodium channel (TC 1.A.6) family.

It is found in the membrane. Functionally, part of a complex that plays a role in tracheal liquid clearance. Probable role in sodium transport. The protein is Sodium channel protein Nach (Nach) of Drosophila ananassae (Fruit fly).